Reading from the N-terminus, the 142-residue chain is Transcription antitermination protein NusB (142 aa).

Belongs to the NusB family. As to quaternary structure, monomer or homodimer; in equilibrium, with a preference for the monomer. Dimerization may be employed to package NusB in an inactive form until recruitment into antitermination complexes.

Involved in transcription antitermination. Required for transcription of ribosomal RNA (rRNA) genes. Binds specifically to the boxA antiterminator sequence of the ribosomal RNA (rrn) operons. The protein is Transcription antitermination protein NusB of Thermotoga maritima (strain ATCC 43589 / DSM 3109 / JCM 10099 / NBRC 100826 / MSB8).